Here is a 637-residue protein sequence, read N- to C-terminus: Chaperone protein HtpG (637 aa).

Residues 1-345 (MSQQETHGFQ…SNDLPLNVSR (345 aa)) are a; substrate-binding. Residues 346-562 (EILQDNHITK…EGEMSTQMIK (217 aa)) are b. The interval 563–637 (LMQAAGQPVP…MNQMLLANLK (75 aa)) is c.

The protein belongs to the heat shock protein 90 family. In terms of assembly, homodimer.

It is found in the cytoplasm. Functionally, molecular chaperone. Has ATPase activity. This chain is Chaperone protein HtpG, found in Shewanella oneidensis (strain ATCC 700550 / JCM 31522 / CIP 106686 / LMG 19005 / NCIMB 14063 / MR-1).